Consider the following 1025-residue polypeptide: Multidrug resistance protein MdtC (1025 aa).

12 helical membrane passes run 3–23, 333–353, 360–380, 387–407, 431–451, 463–483, 528–548, 853–873, 875–895, 897–917, 953–973, and 984–1004; these read FFAL…AITL, EVEQ…FLFL, IIPA…MYLC, LSLM…IVVL, VGFT…PLLL, FAVT…TLTP, LVGV…ISIP, VILI…LYES, VHPL…LLAL, LFNA…IGIV, PIMM…LSGG, and ITIV…TPVV.

This sequence belongs to the resistance-nodulation-cell division (RND) (TC 2.A.6) family. MdtC subfamily. In terms of assembly, part of a tripartite efflux system composed of MdtA, MdtB and MdtC. MdtC forms a heteromultimer with MdtB.

The protein resides in the cell inner membrane. The protein is Multidrug resistance protein MdtC of Shigella sonnei (strain Ss046).